We begin with the raw amino-acid sequence, 354 residues long: Photosystem II protein D1 2 (354 aa).

3 helical membrane passes run tyrosine 29–threonine 46, histidine 118–leucine 133, and tryptophan 142–alanine 156. A chlorophyll a-binding site is contributed by histidine 118. Tyrosine 126 contacts pheophytin a. The [CaMn4O5] cluster site is built by aspartate 170 and glutamate 189. A helical transmembrane segment spans residues phenylalanine 197–leucine 218. Residue histidine 198 coordinates chlorophyll a. A quinone is bound by residues histidine 215 and serine 264 to phenylalanine 265. Fe cation is bound at residue histidine 215. Histidine 272 is a Fe cation binding site. A helical membrane pass occupies residues phenylalanine 274–leucine 288. Histidine 332, glutamate 333, aspartate 342, and alanine 344 together coordinate [CaMn4O5] cluster. Positions alanine 345–glycine 354 are excised as a propeptide.

It belongs to the reaction center PufL/M/PsbA/D family. In terms of assembly, PSII is composed of 1 copy each of membrane proteins PsbA, PsbB, PsbC, PsbD, PsbE, PsbF, PsbH, PsbI, PsbJ, PsbK, PsbL, PsbM, PsbT, PsbX, PsbY, PsbZ, Psb30/Ycf12, peripheral proteins PsbO, CyanoQ (PsbQ), PsbU, PsbV and a large number of cofactors. It forms dimeric complexes. The D1/D2 heterodimer binds P680, chlorophylls that are the primary electron donor of PSII, and subsequent electron acceptors. It shares a non-heme iron and each subunit binds pheophytin, quinone, additional chlorophylls, carotenoids and lipids. D1 provides most of the ligands for the Mn4-Ca-O5 cluster of the oxygen-evolving complex (OEC). There is also a Cl(-1) ion associated with D1 and D2, which is required for oxygen evolution. The PSII complex binds additional chlorophylls, carotenoids and specific lipids. is required as a cofactor. Post-translationally, tyr-161 forms a radical intermediate that is referred to as redox-active TyrZ, YZ or Y-Z. C-terminally processed by CtpA; processing is essential to allow assembly of the oxygen-evolving complex and thus photosynthetic growth.

It is found in the cellular thylakoid membrane. It catalyses the reaction 2 a plastoquinone + 4 hnu + 2 H2O = 2 a plastoquinol + O2. In terms of biological role, photosystem II (PSII) is a light-driven water:plastoquinone oxidoreductase that uses light energy to abstract electrons from H(2)O, generating O(2) and a proton gradient subsequently used for ATP formation. It consists of a core antenna complex that captures photons, and an electron transfer chain that converts photonic excitation into a charge separation. The D1/D2 (PsbA/PsbD) reaction center heterodimer binds P680, the primary electron donor of PSII as well as several subsequent electron acceptors. In Synechococcus sp. (strain JA-2-3B'a(2-13)) (Cyanobacteria bacterium Yellowstone B-Prime), this protein is Photosystem II protein D1 2.